A 202-amino-acid chain; its full sequence is Pyrrolidone-carboxylate peptidase (202 aa).

Active-site residues include Glu78, Cys141, and His165.

Belongs to the peptidase C15 family. Homotetramer.

Its subcellular location is the cytoplasm. It carries out the reaction Release of an N-terminal pyroglutamyl group from a polypeptide, the second amino acid generally not being Pro.. Functionally, removes 5-oxoproline from various penultimate amino acid residues except L-proline. The polypeptide is Pyrrolidone-carboxylate peptidase (Thermosipho melanesiensis (strain DSM 12029 / CIP 104789 / BI429)).